The following is a 324-amino-acid chain: Olfactory receptor 1L3 (324 aa).

Topologically, residues 1 to 25 (MGMSNLTRLSEFILLGLSSRSEDQR) are extracellular. The N-linked (GlcNAc...) asparagine glycan is linked to Asn5. The chain crosses the membrane as a helical span at residues 26–49 (PLFALFLIIYLVTLMGNLLIILAI). The Cytoplasmic portion of the chain corresponds to 50–57 (HSDPRLQN). The helical transmembrane segment at 58-79 (PMYFFLSILSFADICYTTVIVP) threads the bilayer. The Extracellular segment spans residues 80–100 (KMLVNFLSEKKTISYAECLAQ). The cysteines at positions 97 and 189 are disulfide-linked. A helical membrane pass occupies residues 101-120 (MYFFLVFGNIDSYLLAAMAI). Topologically, residues 121–139 (NRCVAICNPFHYVTVMNRR) are cytoplasmic. The helical transmembrane segment at 140–158 (CCVLLLAFPITFSYFHSLL) threads the bilayer. Topologically, residues 159 to 196 (HVLLVNRLTFCTSNVIHHFFCDVNPVLKLSCSSTFVNE) are extracellular. A helical membrane pass occupies residues 197–219 (IVAMTEGLASVMAPFVCIIISYL). The Cytoplasmic segment spans residues 220 to 236 (RILIAVLKIPSAAGKHK). The helical transmembrane segment at 237–259 (AFSTCSSHLTVVILFYGSISYVY) threads the bilayer. Over 260-271 (LQPLSSYTVKDR) the chain is Extracellular. Residues 272-291 (IATINYTVLTSVLNPFIYSL) form a helical membrane-spanning segment. The Cytoplasmic segment spans residues 292–324 (RNKDMKRGLQKLINKIKSQMSRFSTKTNKICGP).

Belongs to the G-protein coupled receptor 1 family.

It localises to the cell membrane. Its function is as follows. Odorant receptor. The sequence is that of Olfactory receptor 1L3 (OR1L3) from Homo sapiens (Human).